The chain runs to 297 residues: N-acetylmuramic acid 6-phosphate etherase (297 aa).

Residues 56–219 form the SIS domain; it reads AIEAFNKGGR…STISMIGIGK (164 aa). The active-site Proton donor is the Glu84. The active site involves Glu115.

It belongs to the GCKR-like family. MurNAc-6-P etherase subfamily. Homodimer.

The enzyme catalyses N-acetyl-D-muramate 6-phosphate + H2O = N-acetyl-D-glucosamine 6-phosphate + (R)-lactate. The protein operates within amino-sugar metabolism; N-acetylmuramate degradation. Its function is as follows. Specifically catalyzes the cleavage of the D-lactyl ether substituent of MurNAc 6-phosphate, producing GlcNAc 6-phosphate and D-lactate. In Lactococcus lactis subsp. cremoris (strain MG1363), this protein is N-acetylmuramic acid 6-phosphate etherase.